Here is a 635-residue protein sequence, read N- to C-terminus: Glutamine sensor PIB2 (635 aa).

Positions 1–110 are disordered; it reads MTALHSVSKT…GTGFVDRKQQ (110 aa). Positions 1–164 are may play a role in attenuating TORC1 signaling; sequence MTALHSVSKT…KTLPFTDDQR (164 aa). Basic and acidic residues predominate over residues 33 to 44; that stretch reads RNHDYRGRKGDE. A phosphoserine mark is found at serine 46 and serine 53. The residue at position 56 (threonine 56) is a Phosphothreonine. Polar residues predominate over residues 67-85; that stretch reads STHSEQSILSSISLKSMVN. 6 positions are modified to phosphoserine: serine 73, serine 113, serine 124, serine 148, serine 165, and serine 174. Disordered stretches follow at residues 123–181 and 224–254; these read NSAE…VSRG and SSNL…TSKV. Residues 238–254 are compositionally biased toward low complexity; it reads SSSSSTSSVSSSSTSKV. Phosphoserine is present on residues serine 300, serine 309, and serine 381. The tract at residues 304 to 440 is required for interaction with TORC1; sequence LPQPASSTNL…PTISNRNSAR (137 aa). An FYVE-type; atypical zinc finger spans residues 452–527; sequence DSKRNSCRYC…ICDDCLVEYE (76 aa). Residues cysteine 458, cysteine 461, cysteine 474, cysteine 477, cysteine 482, histidine 485, cysteine 519, and cysteine 522 each coordinate Zn(2+). Disordered stretches follow at residues 534–557 and 570–623; these read HNAN…DNRK and ALFR…GSVI. 2 stretches are compositionally biased toward acidic residues: residues 543-553 and 601-616; these read INVEEGEDDDN and EEAD…EEGN. The segment at 620–635 is may be required for TORC1 activation; the sequence is GSVIGSVPANWNWSSF.

In terms of assembly, interacts with the TORC1 complex when activated by glutamine or cysteine. Interacts with TOR1; glutamine enhances the interaction. Interacts with KOG1; glutamine enhances the interaction. Interacts with TCO89. Interacts with LST8; glutamine enhances the interaction. Interacts with TOR2; glutamine enhances the interaction.

It localises to the vacuole membrane. Its activity is regulated as follows. Activated by glutamine. May also be activated by cysteine. Functions as an intracellular glutamine sensor that directly activates the TORC1 signaling pathway, to promote cell growth when glutamine is available. May play a role in repressing NPR1 activity independently of TORC1 signaling. The chain is Glutamine sensor PIB2 from Saccharomyces cerevisiae (strain ATCC 204508 / S288c) (Baker's yeast).